The primary structure comprises 187 residues: BLOC-1-related complex subunit 8 homolog (187 aa).

The interval 165–187 (QSQHETANDTRQGYNDDANNDQD) is disordered.

The protein belongs to the BORCS8 family.

The protein localises to the lysosome membrane. In terms of biological role, may participate in the coupling of lysosomes to microtubule plus-end-directed kinesin motor. This chain is BLOC-1-related complex subunit 8 homolog, found in Nematostella vectensis (Starlet sea anemone).